We begin with the raw amino-acid sequence, 255 residues long: Small ribosomal subunit protein eS1 (255 aa).

An N-acetylalanine; partial modification is found at Ala-2.

This sequence belongs to the eukaryotic ribosomal protein eS1 family. In terms of assembly, component of the small ribosomal subunit. Mature ribosomes consist of a small (40S) and a large (60S) subunit. The 40S subunit contains about 33 different proteins and 1 molecule of RNA (18S). The 60S subunit contains about 49 different proteins and 3 molecules of RNA (25S, 5.8S and 5S).

It localises to the cytoplasm. The protein is Small ribosomal subunit protein eS1 of Vanderwaltozyma polyspora (strain ATCC 22028 / DSM 70294 / BCRC 21397 / CBS 2163 / NBRC 10782 / NRRL Y-8283 / UCD 57-17) (Kluyveromyces polysporus).